The chain runs to 530 residues: UDP-glucuronosyltransferase 2B15 (530 aa).

Positions 1-23 are cleaved as a signal peptide; sequence MSLKWTSVFLLIQLSCYFSSGSC. N65 carries N-linked (GlcNAc...) asparagine glycosylation. Position 136 is an N6-succinyllysine (K136). N-linked (GlcNAc...) asparagine glycosylation is found at N316 and N483. The chain crosses the membrane as a helical span at residues 495-515; it reads IAFLLACVATVIFIITKFCLF.

Belongs to the UDP-glycosyltransferase family. As to expression, expressed in many tissues. Present in liver, prostate and testis.

It is found in the endoplasmic reticulum membrane. It carries out the reaction glucuronate acceptor + UDP-alpha-D-glucuronate = acceptor beta-D-glucuronoside + UDP + H(+). It catalyses the reaction 17alpha-estradiol + UDP-alpha-D-glucuronate = 17alpha-estradiol 3-O-(beta-D-glucuronate) + UDP + H(+). The enzyme catalyses 16alpha,17alpha-estriol + UDP-alpha-D-glucuronate = 16alpha,17alpha-estriol 3-O-(beta-D-glucuronate) + UDP + H(+). The catalysed reaction is 17beta-hydroxy-5alpha-androstan-3-one + UDP-alpha-D-glucuronate = 5alpha-dihydrotestosterone 17-O-(beta-D-glucuronate) + UDP + H(+). UDP-glucuronosyltransferase (UGT) that catalyzes phase II biotransformation reactions in which lipophilic substrates are conjugated with glucuronic acid to increase the metabolite's water solubility, thereby facilitating excretion into either the urine or bile. Essential for the elimination and detoxification of drugs, xenobiotics and endogenous compounds. Catalyzes the glucuronidation of endogenous steroid hormones such as androgens (testosterone, androsterone) and estrogens (estradiol, epiestradiol, estriol, catechol estrogens). Displays glucuronidation activity toward several classes of xenobiotic substrates, including phenolic compounds (eugenol, 4-nitrophenol, 4-hydroxybiphenyl) and phenylpropanoids (naringenin, coumarins). Catalyzes the glucuronidation of monoterpenoid alcohols such as borneol, menthol and isomenthol, a class of natural compounds used in essential oils. This is UDP-glucuronosyltransferase 2B15 from Homo sapiens (Human).